The chain runs to 505 residues: MITLTGHTLTIEEMKRLLLEGEGVTACPNSMQKVAECREVVEKIVEDGKVVYGITTGFGKFSDVLIQKDDVKALQHNLIQSHACGIGDPFPEEVSRGMLILRANTMLKGVSGVRPLVVNMLLEFVNRKIHPVVPQQGSLGASGDLAPLSHLALVLLGEGEVFYKGKRVHAMVALTEEGLEPIELEAKEGLALINGTQAMTAQGVLSYIEAEATSYQAELIASMTIEGLQGIIDAFDENVHKTRGYKEQVEVASRIRDILHDSKLTTKQGELRVQDAYSLRCIPQVHGASWQVLNYVKEKLEIEMNAATDNPLIFDGGEKVISGGNFHGQPIAFAMDFLKVGMAELANISERRIERLVNPQLNDLPPFLSPEPGLQSGAMIMQYAAASLVSENKTLAHPASVDSIPSSANQEDHVSMGTIASRHAHQIIQNVRRVLSVEMICAMQAAEYRGIENMSTVTKSFYHQGRQQVPSITNDRIFSTDIENITHWLKTNYSIKERLDVNAAL.

Positions 141 to 143 (ASG) form a cross-link, 5-imidazolinone (Ala-Gly). A 2,3-didehydroalanine (Ser) modification is found at serine 142.

Belongs to the PAL/histidase family. Post-translationally, contains an active site 4-methylidene-imidazol-5-one (MIO), which is formed autocatalytically by cyclization and dehydration of residues Ala-Ser-Gly.

It localises to the cytoplasm. The catalysed reaction is L-histidine = trans-urocanate + NH4(+). Its pathway is amino-acid degradation; L-histidine degradation into L-glutamate; N-formimidoyl-L-glutamate from L-histidine: step 1/3. The polypeptide is Histidine ammonia-lyase (Bacillus thuringiensis (strain Al Hakam)).